Reading from the N-terminus, the 69-residue chain is Large ribosomal subunit protein uL30 (69 aa).

The protein belongs to the universal ribosomal protein uL30 family. In terms of assembly, part of the 50S ribosomal subunit.

The protein is Large ribosomal subunit protein uL30 of Rhizobium etli (strain ATCC 51251 / DSM 11541 / JCM 21823 / NBRC 15573 / CFN 42).